Consider the following 362-residue polypeptide: Protein mom-2 (362 aa).

An N-terminal signal peptide occupies residues 1-24; the sequence is MHINTPVLLAIIYFLVFAPKSADA. 5 disulfide bridges follow: C80–C91, C129–C137, C139–C167, C217–C231, and C219–C226. The N-linked (GlcNAc...) asparagine glycan is linked to N90. A lipid anchor (O-palmitoleoyl serine; by mom-1) is attached at S223. A disordered region spans residues 263 to 282; that stretch reads TVRSSPSAGSSGRSERFARN. Low complexity predominate over residues 265-274; it reads RSSPSAGSSG. 6 disulfides stabilise this stretch: C304-C322, C313-C317, C321-C361, C337-C352, C339-C349, and C344-C345.

The protein belongs to the Wnt family. Post-translationally, palmitoleoylation is required for efficient binding to frizzled receptors. Depalmitoleoylation leads to Wnt signaling pathway inhibition. Expressed by anchor cell and vulva precursor cell descendants P5.ppa, P5.ppp, P7.paa and P7.pap. Expressed in the tail and weakly expressed in the vulva and body wall muscles.

It is found in the secreted. Its subcellular location is the extracellular space. The protein localises to the extracellular matrix. Ligand for members of the frizzled family of seven transmembrane receptors. Required in embryonic development for endoderm specification and the correct positioning and orientation of the mitotic spindles and division planes in blastomere cells. Involved in cleavage axis determination. Binds to receptor tyrosine kinase cam-1. Together with wnt ligand lin-44, plays a role in controlling vulva precursor cell P7.p lineage orientation during vulva development, probably by acting as a ligand for tyrosine kinase receptor lin-18. May act redundantly with other Wnt ligands such as cwn-1 and cwn-2 to control seam cell polarity. The protein is Protein mom-2 (mom-2) of Caenorhabditis elegans.